A 593-amino-acid polypeptide reads, in one-letter code: NADH-quinone oxidoreductase subunit C/D (593 aa).

The tract at residues Met-1 to Gln-184 is NADH dehydrogenase I subunit C. The interval Asp-208–Arg-593 is NADH dehydrogenase I subunit D.

In the N-terminal section; belongs to the complex I 30 kDa subunit family. This sequence in the C-terminal section; belongs to the complex I 49 kDa subunit family. NDH-1 is composed of 13 different subunits. Subunits NuoB, CD, E, F, and G constitute the peripheral sector of the complex.

It localises to the cell inner membrane. It catalyses the reaction a quinone + NADH + 5 H(+)(in) = a quinol + NAD(+) + 4 H(+)(out). Its function is as follows. NDH-1 shuttles electrons from NADH, via FMN and iron-sulfur (Fe-S) centers, to quinones in the respiratory chain. The immediate electron acceptor for the enzyme in this species is believed to be ubiquinone. Couples the redox reaction to proton translocation (for every two electrons transferred, four hydrogen ions are translocated across the cytoplasmic membrane), and thus conserves the redox energy in a proton gradient. This is NADH-quinone oxidoreductase subunit C/D from Pseudomonas savastanoi pv. phaseolicola (strain 1448A / Race 6) (Pseudomonas syringae pv. phaseolicola (strain 1448A / Race 6)).